We begin with the raw amino-acid sequence, 191 residues long: 3-isopropylmalate dehydratase small subunit (191 aa).

It belongs to the LeuD family. LeuD type 1 subfamily. In terms of assembly, heterodimer of LeuC and LeuD.

The enzyme catalyses (2R,3S)-3-isopropylmalate = (2S)-2-isopropylmalate. The protein operates within amino-acid biosynthesis; L-leucine biosynthesis; L-leucine from 3-methyl-2-oxobutanoate: step 2/4. Catalyzes the isomerization between 2-isopropylmalate and 3-isopropylmalate, via the formation of 2-isopropylmaleate. The protein is 3-isopropylmalate dehydratase small subunit of Anaeromyxobacter sp. (strain K).